We begin with the raw amino-acid sequence, 307 residues long: Atrochrysone carboxyl ACP thioesterase (307 aa).

Zn(2+) is bound by residues H104, H106, D108, and H109. Catalysis depends on D108, which acts as the Proton donor/acceptor.

This sequence belongs to the metallo-beta-lactamase superfamily. Zn(2+) serves as cofactor.

The enzyme catalyses atrochrysone carboxyl-[ACP] + H2O = atrochrysone carboxylate + holo-[ACP] + H(+). It functions in the pathway secondary metabolite biosynthesis. Atrochrysone carboxyl ACP thioesterase; part of the gene cluster that mediates the biosynthesis of monodictyphenone, a prenyl xanthone derivative. The pathway begins with the synthesis of atrochrysone thioester by the polyketide synthase (PKS) mdpG. The atrochrysone carboxyl ACP thioesterase mdpF then breaks the thioester bond and releases the atrochrysone carboxylic acid from mdpG. The atrochrysone carboxylic acid is then converted to atrochrysone which is further transformed into emodin anthrone. The next step is performed by the anthrone oxygenase mdpH that catalyzes the oxidation of emodinanthrone to emodin. Emodin is further modified to yield monodictyphenone via several steps involving mdpB, mdpC mdpJ, mdpK and mdpL. The short chain dehydrogenase mdpC converts the tautomers of emodin hydroquinone into the 3-hydroxy-3,4-dihydroan-thracen-1(2H)-one derivative. These enzymes with xptA, xptB and xptC are also proposed to be involved in the synthesis of shamixanthone from emodin. Especially, direct reduction of emodin by the short chain dehydrogenase mdpC followed by dehydration catalyzed by the scytalone dehydratase-like protein mdpB gives loss of oxygen and formation of chrysophanol intermediate in two simple steps. This chain is Atrochrysone carboxyl ACP thioesterase, found in Emericella nidulans (strain FGSC A4 / ATCC 38163 / CBS 112.46 / NRRL 194 / M139) (Aspergillus nidulans).